A 253-amino-acid chain; its full sequence is MATIKEIKAILETIVDLKDKRWQEYQTDSRAGVQKAILQRKKNIQSDLDEEARLEQMLVYEKKLYIEHINLIAGIDEVGRGPLAGPVVAAAVILPPNCKIKHLNDSKKIPKKKHQEIYQNILDQALAVGIGIQDSQCIDDINIYEATKHAMIDAVSHLSVVPEHLLIDAMVLDLPIPQTKIIKGDANSLSIAAASIVAKVTRDKIMSDYDSKYPGYAFSKNAGYGTKEHLEGLQKYGITPIHRKSFEPIKSML.

The region spanning Asn-70–Leu-253 is the RNase H type-2 domain. A divalent metal cation contacts are provided by Asp-76, Glu-77, and Asp-168.

It belongs to the RNase HII family. Mn(2+) serves as cofactor. Requires Mg(2+) as cofactor.

The protein localises to the cytoplasm. It catalyses the reaction Endonucleolytic cleavage to 5'-phosphomonoester.. Endonuclease that specifically degrades the RNA of RNA-DNA hybrids. This is Ribonuclease HII from Streptococcus agalactiae serotype Ia (strain ATCC 27591 / A909 / CDC SS700).